Consider the following 215-residue polypeptide: Transmembrane protein 267 (215 aa).

A run of 3 helical transmembrane segments spans residues 77–97 (FGEVLLAGFLASVIDVDHFFQ), 114–134 (FLHCSTVIPIAVLSVKLAVHL), and 178–198 (SSFYVISTLSLPHLCSFLMYL).

It is found in the membrane. The chain is Transmembrane protein 267 from Mus musculus (Mouse).